Consider the following 359-residue polypeptide: uncharacterized protein (359 aa).

A compositionally biased stretch (low complexity) spans 73–88 (AATAGTTPATGASGSA). Positions 73-93 (AATAGTTPATGASGSARPTDA) are disordered. Residues 179 to 354 (PSTCRGDNVS…AFSAAIQAGE (176 aa)) form the Macro domain.

This is an uncharacterized protein from Mycobacterium tuberculosis (strain ATCC 25618 / H37Rv).